The following is a 328-amino-acid chain: Ubiquitin-conjugating enzyme E2 Z (328 aa).

The UBC core domain occupies 71 to 225; that stretch reads QCILRIKRDI…IRHETMRVAV (155 aa). C160 serves as the catalytic Glycyl thioester intermediate. The interval 295 to 328 is disordered; that stretch reads RLREKCPPEDNDGDSDSDTSSSGTDPDSQGSSQP. Low complexity predominate over residues 312 to 328; sequence DTSSSGTDPDSQGSSQP.

This sequence belongs to the ubiquitin-conjugating enzyme family.

It is found in the cytoplasm. The protein resides in the nucleus. It catalyses the reaction S-ubiquitinyl-[E1 ubiquitin-activating enzyme]-L-cysteine + [E2 ubiquitin-conjugating enzyme]-L-cysteine = [E1 ubiquitin-activating enzyme]-L-cysteine + S-ubiquitinyl-[E2 ubiquitin-conjugating enzyme]-L-cysteine.. The protein operates within protein modification; protein ubiquitination. Its function is as follows. Catalyzes the covalent attachment of ubiquitin to other proteins. May be involved in apoptosis regulation. This Danio rerio (Zebrafish) protein is Ubiquitin-conjugating enzyme E2 Z (ube2z).